We begin with the raw amino-acid sequence, 307 residues long: Protein Y (307 aa).

The protein belongs to the ATP-dependent AMP-binding enzyme family.

It participates in antibiotic biosynthesis; candicidin biosynthesis. Its function is as follows. May be a p-aminobenzoic acid-CoA ligase that activates PabA to start the biosynthesis of candicidin. The protein is Protein Y of Streptomyces griseus.